A 732-amino-acid chain; its full sequence is MAP7 domain-containing protein 2 (732 aa).

At Met1 the chain carries N-acetylmethionine. A compositionally biased stretch (gly residues) spans 1 to 10 (MERGGGGSGT). Disordered regions lie at residues 1–64 (MERG…RREE), 95–123 (WRKL…LREE), 157–186 (PGGH…KRLS), 210–244 (GPLN…GKEA), and 279–509 (EFSG…KQKE). Residues 49-64 (LKSDERQRLAKERREE) show a composition bias toward basic and acidic residues. The stretch at 51–146 (SDERQRLAKE…RTQQLELKKK (96 aa)) forms a coiled coil. Residues 329-345 (MPKRKAEKEKSNKEREG) show a composition bias toward basic and acidic residues. The segment covering 347-357 (LAQQAAGPQGE) has biased composition (low complexity). A compositionally biased stretch (basic and acidic residues) spans 359 to 374 (ALEKHVVDKHASEKHA). The segment covering 375-386 (AAAGGKAENSAA) has biased composition (low complexity). Residues 404 to 509 (LAEKRRQARL…EKAMIEKQKE (106 aa)) show a composition bias toward basic and acidic residues.

It belongs to the MAP7 family. In terms of assembly, interacts (via N-terminus) with microtubules; facilitates microtubule stabilization. Interacts with kinesin-1 family members, KIF5A, KIF5B and KIF5C.

Its subcellular location is the cytoplasm. It localises to the cytoskeleton. The protein localises to the microtubule organizing center. The protein resides in the centrosome. It is found in the midbody. Its subcellular location is the cell projection. It localises to the neuron projection. The protein localises to the axon. Functionally, microtubule-stabilizing protein that plays a role in the control of cell motility and neurite outgrowth via direct binding to the microtubule. Acts as a critical cofactor for kinesin transport. In the proximal axon, regulates kinesin-1 family members, KIF5A, KIF5B and KIF5C recruitment to microtubules and contributes to kinesin-1-mediated transport in the axons. This is MAP7 domain-containing protein 2 (MAP7D2) from Homo sapiens (Human).